Here is a 542-residue protein sequence, read N- to C-terminus: CTP synthase (542 aa).

The amidoligase domain stretch occupies residues 1–265 (MARYVFITGG…DNEVLAAFGI (265 aa)). Ser-13 contributes to the CTP binding site. A UTP-binding site is contributed by Ser-13. ATP contacts are provided by residues 14–19 (SLGKGI) and Asp-71. The Mg(2+) site is built by Asp-71 and Glu-139. CTP is bound by residues 146 to 148 (DIE), 186 to 191 (KTKPTQ), and Lys-222. UTP-binding positions include 186–191 (KTKPTQ) and Lys-222. Positions 291–541 (TIAIVGKYTG…IEAALEQSRL (251 aa)) constitute a Glutamine amidotransferase type-1 domain. Residue Gly-353 coordinates L-glutamine. Catalysis depends on Cys-380, which acts as the Nucleophile; for glutamine hydrolysis. L-glutamine is bound by residues 381-384 (FGMQ), Glu-404, and Arg-469. Active-site residues include His-514 and Glu-516.

It belongs to the CTP synthase family. Homotetramer.

It carries out the reaction UTP + L-glutamine + ATP + H2O = CTP + L-glutamate + ADP + phosphate + 2 H(+). It catalyses the reaction L-glutamine + H2O = L-glutamate + NH4(+). The catalysed reaction is UTP + NH4(+) + ATP = CTP + ADP + phosphate + 2 H(+). Its pathway is pyrimidine metabolism; CTP biosynthesis via de novo pathway; CTP from UDP: step 2/2. With respect to regulation, allosterically activated by GTP, when glutamine is the substrate; GTP has no effect on the reaction when ammonia is the substrate. The allosteric effector GTP functions by stabilizing the protein conformation that binds the tetrahedral intermediate(s) formed during glutamine hydrolysis. Inhibited by the product CTP, via allosteric rather than competitive inhibition. In terms of biological role, catalyzes the ATP-dependent amination of UTP to CTP with either L-glutamine or ammonia as the source of nitrogen. Regulates intracellular CTP levels through interactions with the four ribonucleotide triphosphates. The chain is CTP synthase from Rhizobium meliloti (strain 1021) (Ensifer meliloti).